The following is a 1067-amino-acid chain: Probable isoleucine--tRNA ligase, cytoplasmic (1067 aa).

The short motif at 47–57 (PFATGLPHYGH) is the 'HIGH' region element. Positions 604 to 608 (KMSKR) match the 'KMSKS' region motif. An ATP-binding site is contributed by Lys-607.

The protein belongs to the class-I aminoacyl-tRNA synthetase family.

The protein localises to the cytoplasm. The enzyme catalyses tRNA(Ile) + L-isoleucine + ATP = L-isoleucyl-tRNA(Ile) + AMP + diphosphate. The chain is Probable isoleucine--tRNA ligase, cytoplasmic (ileS) from Dictyostelium discoideum (Social amoeba).